The following is a 305-amino-acid chain: Ribosomal RNA small subunit methyltransferase H (305 aa).

S-adenosyl-L-methionine contacts are provided by residues 37–39 (GGH), aspartate 57, phenylalanine 85, aspartate 101, and histidine 108.

It belongs to the methyltransferase superfamily. RsmH family.

The protein localises to the cytoplasm. The enzyme catalyses cytidine(1402) in 16S rRNA + S-adenosyl-L-methionine = N(4)-methylcytidine(1402) in 16S rRNA + S-adenosyl-L-homocysteine + H(+). Specifically methylates the N4 position of cytidine in position 1402 (C1402) of 16S rRNA. The protein is Ribosomal RNA small subunit methyltransferase H of Parabacteroides distasonis (strain ATCC 8503 / DSM 20701 / CIP 104284 / JCM 5825 / NCTC 11152).